Here is a 162-residue protein sequence, read N- to C-terminus: ATP synthase subunit delta, mitochondrial (162 aa).

The N-terminal 25 residues, 1-25 (MSSLRLLASAARRATTHVAYTRRGY), are a transit peptide targeting the mitochondrion.

Belongs to the ATPase epsilon chain family. In terms of assembly, F-type ATPases have 2 components, CF(1) - the catalytic core - and CF(0) - the membrane proton channel. CF(1) has five subunits: alpha(3), beta(3), gamma(1), delta(1), epsilon(1). CF(0) has three main subunits: a, b and c.

It localises to the mitochondrion. Its subcellular location is the mitochondrion inner membrane. Mitochondrial membrane ATP synthase (F(1)F(0) ATP synthase or Complex V) produces ATP from ADP in the presence of a proton gradient across the membrane which is generated by electron transport complexes of the respiratory chain. F-type ATPases consist of two structural domains, F(1) - containing the extramembraneous catalytic core, and F(0) - containing the membrane proton channel, linked together by a central stalk and a peripheral stalk. During catalysis, ATP turnover in the catalytic domain of F(1) is coupled via a rotary mechanism of the central stalk subunits to proton translocation. Part of the complex F(1) domain and of the central stalk which is part of the complex rotary element. Rotation of the central stalk against the surrounding alpha(3)beta(3) subunits leads to hydrolysis of ATP in three separate catalytic sites on the beta subunits. This Agaricus bisporus (White button mushroom) protein is ATP synthase subunit delta, mitochondrial (atpD).